The sequence spans 403 residues: Decapping and exoribonuclease protein 1 (403 aa).

Glu223 serves as a coordination point for a divalent metal cation. Residue Glu260 participates in substrate binding. Residues Asp262, Glu273, and Ile274 each contribute to the a divalent metal cation site. Residues Lys275 and Gln297 each contribute to the substrate site.

Belongs to the DXO/Dom3Z family. A divalent metal cation serves as cofactor.

It is found in the cytoplasm. The catalysed reaction is a 5'-end NAD(+)-phospho-ribonucleoside in mRNA + H2O = a 5'-end phospho-ribonucleoside in mRNA + NAD(+) + H(+). The enzyme catalyses a 5'-end (N(7)-methyl 5'-triphosphoguanosine)-ribonucleoside-ribonucleotide in mRNA + H2O = a (N(7)-methyl 5'-triphosphoguanosine)-nucleoside + a 5'-end phospho-ribonucleoside in mRNA + H(+). Decapping enzyme for NAD-capped RNAs: specifically hydrolyzes the nicotinamide adenine dinucleotide (NAD) cap from a subset of RNAs by removing the entire NAD moiety from the 5'-end of an NAD-capped RNA. The NAD-cap is present at the 5'-end of some RNAs and snoRNAs. In contrast to the canonical 5'-end N7 methylguanosine (m7G) cap, the NAD cap promotes mRNA decay. Also acts as a non-canonical decapping enzyme that removes the entire cap structure of m7G capped or incompletely capped RNAs and mediates their subsequent degradation. Has decapping and 5'-3' exonuclease activities. Has decapping activity toward incomplete 5'-end cap mRNAs such as unmethylated 5'-end-capped RNA to release GpppN and 5'-end monophosphate RNA. The 5'-end monophosphate RNA is then degraded by the 5'-3' exoribonuclease activity, enabling this enzyme to decap and degrade incompletely capped mRNAs. This Kluyveromyces lactis (strain ATCC 8585 / CBS 2359 / DSM 70799 / NBRC 1267 / NRRL Y-1140 / WM37) (Yeast) protein is Decapping and exoribonuclease protein 1.